The sequence spans 297 residues: Putative S-adenosyl-L-methionine-dependent methyltransferase Mjls_1072 (297 aa).

Residues Asp124 and 153-154 (DL) contribute to the S-adenosyl-L-methionine site.

Belongs to the UPF0677 family.

Functionally, exhibits S-adenosyl-L-methionine-dependent methyltransferase activity. This Mycobacterium sp. (strain JLS) protein is Putative S-adenosyl-L-methionine-dependent methyltransferase Mjls_1072.